A 188-amino-acid chain; its full sequence is Adenylate kinase (188 aa).

Residue 12-17 coordinates ATP; it reads GSGKTT. The interval 33–62 is NMP; that stretch reads STGDLLRAEVASGSELGKKIDSFISKGNLV. AMP contacts are provided by residues threonine 34, arginine 39, 60–62, 87–90, and glutamine 94; these read NLV and GYPR. Residues 129 to 135 form an LID region; it reads GRARGAD. Arginine 130 contacts ATP. Residues arginine 132 and arginine 144 each coordinate AMP. Residue arginine 172 coordinates ATP.

It belongs to the adenylate kinase family. As to quaternary structure, monomer.

It localises to the cytoplasm. It carries out the reaction AMP + ATP = 2 ADP. It functions in the pathway purine metabolism; AMP biosynthesis via salvage pathway; AMP from ADP: step 1/1. Functionally, catalyzes the reversible transfer of the terminal phosphate group between ATP and AMP. Plays an important role in cellular energy homeostasis and in adenine nucleotide metabolism. The chain is Adenylate kinase from Campylobacter curvus (strain 525.92).